The sequence spans 258 residues: MGITSTTDGDGITTVTVDYPPVNAIPSRGWFELADAVLDAGRNPDTHVVILRAEGRGFNAGVDIKEMQATDGYGALVDANRGCAAAFAAVYDCAVPVVVAVNGFCVGGGIGLVGNADVIVASDDAVFGLPEVDRGALGAATHLARLVPQHMMRTLYYTAQNVTAQQLQHFGSVYEVVPREKLDDTARDIAAKIAAKDTRVIRCAKEAINGIDPVDVKTSYRLEQGYTFELNLAGVSDEHRDEFVETGKPRSHSNNRKG.

Belongs to the enoyl-CoA hydratase/isomerase family.

The catalysed reaction is (7aS)-7a-methyl-1,5-dioxo-2,3,5,6,7,7a-hexahydro-1H-indene-carboxyl-CoA + H2O = (3E)-2-(2-carboxylatoethyl)-3-methyl-6-oxocyclohex-1-ene-1-carboxyl-CoA + H(+). The protein operates within steroid metabolism; cholesterol degradation. Involved in the final steps of cholesterol and steroid degradation. Catalyzes the hydrolytic ring D opening of (7aS)-7a-methyl-1,5-dioxo-2,3,5,6,7,7a-hexahydro-1H-indene-carboxyl-CoA (HIEC-CoA) to (3E)-2-(2-carboxylatoethyl)-3-methyl-6-oxocyclohex-1-ene-1-carboxyl-CoA (COCHEA-CoA). This chain is (7aS)-7a-methyl-1,5-dioxo-2,3,5,6,7,7a-hexahydro-1H-indene-carboxyl-CoA hydrolase, found in Rhodococcus jostii (strain RHA1).